Consider the following 652-residue polypeptide: Bifunctional protein ThiO/ThiG (652 aa).

The segment at 1–366 is thiO; sequence MTRDIVIIGG…HYSRSQKQAS (366 aa). Residues 5–19 and 44–46 each bind FAD; these read IVII…AIAV and AGM. E52 lines the glycine pocket. V173 contributes to the FAD binding site. Glycine contacts are provided by R301 and R327. 325 to 331 serves as a coordination point for FAD; the sequence is HYRNGIL. Residues 393–652 form a thiG region; the sequence is PLIIAGKSFH…ASSPVTGTIS (260 aa). Catalysis depends on K494, which acts as the Schiff-base intermediate with DXP. 1-deoxy-D-xylulose 5-phosphate is bound by residues G555, 581–582, and 603–604; these read AG and NS.

In the N-terminal section; belongs to the DAO family. ThiO subfamily. The protein in the C-terminal section; belongs to the ThiG family. Interacts with ThiH and ThiS. The cofactor is FAD.

It is found in the cytoplasm. The enzyme catalyses glycine + O2 + H2O = glyoxylate + H2O2 + NH4(+). It catalyses the reaction [ThiS sulfur-carrier protein]-C-terminal-Gly-aminoethanethioate + 2-iminoacetate + 1-deoxy-D-xylulose 5-phosphate = [ThiS sulfur-carrier protein]-C-terminal Gly-Gly + 2-[(2R,5Z)-2-carboxy-4-methylthiazol-5(2H)-ylidene]ethyl phosphate + 2 H2O + H(+). Its pathway is cofactor biosynthesis; thiamine diphosphate biosynthesis. Catalyzes the FAD-dependent oxidative deamination of glycine. Is essential for thiamine biosynthesis since the oxidation of glycine catalyzed by ThiO generates the glycine imine intermediate (dehydroglycine) required for the biosynthesis of the thiazole ring of thiamine pyrophosphate. In terms of biological role, catalyzes the rearrangement of 1-deoxy-D-xylulose 5-phosphate (DXP) to produce the thiazole phosphate moiety of thiamine. Sulfur is provided by the thiocarboxylate moiety of the carrier protein ThiS. In vitro, sulfur can be provided by H(2)S. This Nostoc sp. (strain PCC 7120 / SAG 25.82 / UTEX 2576) protein is Bifunctional protein ThiO/ThiG (thiO/thiG).